The chain runs to 475 residues: Beta-amyrin 6-beta-monooxygenase (475 aa).

A helical membrane pass occupies residues 6–22; sequence LYSLAFALVYISLYFIF. Residue C423 participates in heme binding.

The protein belongs to the cytochrome P450 family. Heme is required as a cofactor. Specifically expressed in roots.

It localises to the membrane. It carries out the reaction beta-amyrin + reduced [NADPH--hemoprotein reductase] + O2 = daturadiol + oxidized [NADPH--hemoprotein reductase] + H2O + H(+). Catalyzes the C-6 beta-hydroxylation of beta-amyrin to form daturadiol. Catalyzes the C-6 beta-hydroxylation of alpha-amyrin to form 6-beta-hydroxy-alpha-amyrin. This chain is Beta-amyrin 6-beta-monooxygenase, found in Solanum lycopersicum (Tomato).